Here is a 349-residue protein sequence, read N- to C-terminus: Acyl-CoA Delta(11) desaturase (349 aa).

2 helical membrane passes run 41–61 and 66–86; these read FLTF…CFTS and TLLF…AGAH. The Histidine box-1 signature appears at 86–91; sequence HRLWTH. A Histidine box-2 motif is present at residues 123-127; it reads HRLHH. A helical membrane pass occupies residues 184 to 204; sequence AVPLIGTVCFALPTLIPVYCW. The short motif at 263–267 is the Histidine box-3 element; that stretch reads HNYHH. The helical transmembrane segment at 282–302 threads the bilayer; it reads FLNLTTLFIDFCAWFGWAYDL.

The protein belongs to the fatty acid desaturase type 1 family. It depends on Fe cation as a cofactor. Adult female pheromone gland. Increases by two or three orders of magnitude during the first 2 days after adult eclosion.

Its subcellular location is the endoplasmic reticulum membrane. The enzyme catalyses an 11,12-saturated fatty acyl-CoA + 2 Fe(II)-[cytochrome b5] + O2 + 2 H(+) = an (11Z)-Delta(11)-fatty acyl-CoA + 2 Fe(III)-[cytochrome b5] + 2 H2O. Functionally, catalyzes the formation of Delta(11) fatty acyl precursors in the pheromone gland. This chain is Acyl-CoA Delta(11) desaturase (D11DS), found in Trichoplusia ni (Cabbage looper).